We begin with the raw amino-acid sequence, 557 residues long: Dihydroxy-acid dehydratase 2 (557 aa).

A [2Fe-2S] cluster-binding site is contributed by Cys-50. Asp-82 is a binding site for Mg(2+). Cys-123 contacts [2Fe-2S] cluster. 2 residues coordinate Mg(2+): Asp-124 and Lys-125. The residue at position 125 (Lys-125) is an N6-carboxylysine. Cys-195 lines the [2Fe-2S] cluster pocket. Glu-447 contributes to the Mg(2+) binding site. Ser-473 (proton acceptor) is an active-site residue.

Belongs to the IlvD/Edd family. Homodimer. [2Fe-2S] cluster serves as cofactor. It depends on Mg(2+) as a cofactor.

It catalyses the reaction (2R)-2,3-dihydroxy-3-methylbutanoate = 3-methyl-2-oxobutanoate + H2O. The catalysed reaction is (2R,3R)-2,3-dihydroxy-3-methylpentanoate = (S)-3-methyl-2-oxopentanoate + H2O. It functions in the pathway amino-acid biosynthesis; L-isoleucine biosynthesis; L-isoleucine from 2-oxobutanoate: step 3/4. Its pathway is amino-acid biosynthesis; L-valine biosynthesis; L-valine from pyruvate: step 3/4. In terms of biological role, functions in the biosynthesis of branched-chain amino acids. Catalyzes the dehydration of (2R,3R)-2,3-dihydroxy-3-methylpentanoate (2,3-dihydroxy-3-methylvalerate) into 2-oxo-3-methylpentanoate (2-oxo-3-methylvalerate) and of (2R)-2,3-dihydroxy-3-methylbutanoate (2,3-dihydroxyisovalerate) into 2-oxo-3-methylbutanoate (2-oxoisovalerate), the penultimate precursor to L-isoleucine and L-valine, respectively. The protein is Dihydroxy-acid dehydratase 2 of Burkholderia lata (strain ATCC 17760 / DSM 23089 / LMG 22485 / NCIMB 9086 / R18194 / 383).